Reading from the N-terminus, the 88-residue chain is MPQAKLKDLLEFPCAFTFKVVGANRADLIDDVVVVVQKYAKGDYNPRQQLSSKGTYNSVSIDIIAEHIEQVEVLYVELAKIDGVRMVL.

It belongs to the UPF0250 family.

The chain is UPF0250 protein PM1928 from Pasteurella multocida (strain Pm70).